Consider the following 232-residue polypeptide: MSQLIPAVRVAATAKPAKSAIIFVHGLGDSGSGWSWFPQLAKQSNIIKNCDSINYVFPNAPLMPITANGGYVMPGWFDIYEFGNPEAKQDIDGFHKSCETLKSLIKEQIDNHDIPADKIIIGGFSQGAAVSLATVALLDFKVGGVVALSGFSPIKESLPQIMNKANLETPIFQGHGTADPIVNFDFGKQTSELYQKLGFKNVKFHTYPGVAHSASEEELADAMNFIDDVLKK.

Residues Ser-125, Asp-179, and His-212 each act as charge relay system in the active site.

Belongs to the AB hydrolase superfamily. AB hydrolase 2 family.

The protein localises to the cytoplasm. The protein resides in the nucleus. The enzyme catalyses S-hexadecanoyl-L-cysteinyl-[protein] + H2O = L-cysteinyl-[protein] + hexadecanoate + H(+). In terms of biological role, hydrolyzes fatty acids from S-acylated cysteine residues in proteins with a strong preference for palmitoylated G-alpha proteins over other acyl substrates. Mediates the deacylation of G-alpha proteins such as GPA1 in vivo, but has weak or no activity toward palmitoylated Ras proteins. Has weak lysophospholipase activity in vitro; however such activity may not exist in vivo. The sequence is that of Acyl-protein thioesterase 1 from Debaryomyces hansenii (strain ATCC 36239 / CBS 767 / BCRC 21394 / JCM 1990 / NBRC 0083 / IGC 2968) (Yeast).